The primary structure comprises 487 residues: Citrate/succinate antiporter (487 aa).

Transmembrane regions (helical) follow at residues 11–31, 60–80, 95–115, 138–158, 190–210, 214–234, 237–257, 288–308, 309–329, 345–365, 379–399, 401–421, 424–444, and 463–483; these read LLAP…DGMP, FIAV…AKEL, GLAG…IFAL, TLTL…FTPS, IGGY…SMFV, APNV…ISWL, FLCF…LSYV, WTLI…SEVI, NATA…VVPW, LATL…DWFA, ATVI…ASLS, HTAT…GVPM, LCIL…YATG, and LGAI…WPIL.

Belongs to the SLC13A/DASS transporter (TC 2.A.47) family. DIT1 subfamily.

It is found in the cell inner membrane. Responsible for the uptake of citrate in exchange to the efflux of succinate. Has a relatively broad specificity for C(4)-dicarboxylates and tricarboxylates. This is Citrate/succinate antiporter (citT) from Escherichia coli O157:H7.